Reading from the N-terminus, the 71-residue chain is Putative membrane protein insertion efficiency factor (71 aa).

This sequence belongs to the UPF0161 family.

It is found in the cell membrane. Could be involved in insertion of integral membrane proteins into the membrane. The protein is Putative membrane protein insertion efficiency factor of Ruminiclostridium cellulolyticum (strain ATCC 35319 / DSM 5812 / JCM 6584 / H10) (Clostridium cellulolyticum).